The following is a 287-amino-acid chain: MATLLQEENTTSLEAIPSNTTAKTRPTVLVFDSGVGGLSVYQEVRQLLPDLHYIYAFDNVAFPYGEKSEEFIVERVLEIVSAVQQRHPLAIVIIACNTASTVSLPALRERFTFPVVGVVPAIKPAARLTANGVVGLLATRGTVQRTYTHELIARFATDCKIELLGSSELVELAEAKLHGEAVPLPTLKKILHPWLSMREPPDTVVLGCTHFPLLAEELMQVLPEGTRLIDSGAAIARRTAWLISTQENLVSTQEDNLAYCMALNEDTDALLPVLQGYGFKSLKKLPV.

Substrate-binding positions include 32–33 (DS) and 64–65 (YG). The active-site Proton donor/acceptor is the C96. 97–98 (NT) is a substrate binding site. The active-site Proton donor/acceptor is C208. 209-210 (TH) serves as a coordination point for substrate.

This sequence belongs to the aspartate/glutamate racemases family.

It carries out the reaction L-glutamate = D-glutamate. It functions in the pathway cell wall biogenesis; peptidoglycan biosynthesis. Provides the (R)-glutamate required for cell wall biosynthesis. This Serratia proteamaculans (strain 568) protein is Glutamate racemase.